Consider the following 134-residue polypeptide: Ribosome-binding factor A (134 aa).

It belongs to the RbfA family. As to quaternary structure, monomer. Binds 30S ribosomal subunits, but not 50S ribosomal subunits or 70S ribosomes.

Its subcellular location is the cytoplasm. In terms of biological role, one of several proteins that assist in the late maturation steps of the functional core of the 30S ribosomal subunit. Associates with free 30S ribosomal subunits (but not with 30S subunits that are part of 70S ribosomes or polysomes). Required for efficient processing of 16S rRNA. May interact with the 5'-terminal helix region of 16S rRNA. In Rhizobium etli (strain CIAT 652), this protein is Ribosome-binding factor A.